The following is a 107-amino-acid chain: Transcription initiation factor IIA subunit 2-2 (107 aa).

This sequence belongs to the TFIIA subunit 2 family. TFIIA is a heterodimer of the large unprocessed subunit 1 and a small subunit gamma. It was originally believed to be a heterotrimer of an alpha (p30), a beta (p20) and a gamma (p14) subunit.

The protein resides in the nucleus. In terms of biological role, TFIIA is a component of the transcription machinery of RNA polymerase II and plays an important role in transcriptional activation. TFIIA in a complex with TBP mediates transcriptional activity. This chain is Transcription initiation factor IIA subunit 2-2 (TfIIA-S-2), found in Drosophila melanogaster (Fruit fly).